Reading from the N-terminus, the 149-residue chain is Calmodulin-B (149 aa).

The residue at position 2 (alanine 2) is an N-acetylalanine. EF-hand domains are found at residues 8 to 43 (EQIAEFKEAFSLFDKDGDGTITTKELGTVMRSLGQN), 44 to 79 (PTEAELQDMINEVDADGNGTIDFPEFLTMMARKMKE), 81 to 116 (DSEEEIREAFRVFDKDGNGFISAAELRHVMTNLGEK), and 117 to 149 (LTDEEVDEMIREADIDGDGQVNYEEFVTMMTCK). 14 residues coordinate Ca(2+): aspartate 21, aspartate 23, aspartate 25, threonine 27, glutamate 32, aspartate 57, aspartate 59, asparagine 61, threonine 63, glutamate 68, aspartate 94, aspartate 96, asparagine 98, and glutamate 105. Lysine 116 is modified (N6,N6,N6-trimethyllysine). Residues aspartate 130, aspartate 132, aspartate 134, glutamine 136, and glutamate 141 each coordinate Ca(2+).

This sequence belongs to the calmodulin family.

Its function is as follows. Calmodulin mediates the control of a large number of enzymes, ion channels and other proteins by Ca(2+). Among the enzymes to be stimulated by the calmodulin-Ca(2+) complex are a number of protein kinases and phosphatases. The chain is Calmodulin-B from Halocynthia roretzi (Sea squirt).